The sequence spans 316 residues: Lys-63-specific deubiquitinase BRCC36 (316 aa).

Ala2 carries the N-acetylalanine modification. The MPN domain occupies 12–179; sequence VHLESDAFLV…YTCFQSIQAQ (168 aa). Residues His122, His124, and Asp135 each coordinate Zn(2+). The short motif at 122 to 135 is the JAMM motif element; it reads HSHPHITVWPSHVD. At Ser258 the chain carries Phosphoserine.

Belongs to the peptidase M67A family. BRCC36 subfamily. As to quaternary structure, component of the ARISC complex, at least composed of UIMC1/RAP80, ABRAXAS1, BRCC3/BRCC36, BABAM2 and BABAM1/NBA1. Component of the BRCA1-A complex, at least composed of BRCA1, BARD1, UIMC1/RAP80, ABRAXAS1, BRCC3/BRCC36, babam2 and BABAM1/NBA1. In the BRCA1-A complex, interacts directly with ABRAXAS1 and babam2. Component of the BRISC complex, at least composed of ABRAXAS2, BRCC3/BRCC36, BABAM2 and BABAM1/NBA1. Identified in a complex with SHMT2 and the other subunits of the BRISC complex. In the BRISC complex, interacts directly with ABRAXAS2. Identified in a complex with ABRAXAS2 and NUMA1. The BRISC complex interacts with the CSN complex. Component of the BRCA1/BRCA2 containing complex (BRCC), which also contains BRCA1, BRCA2, BARD1, BABAM2 and RAD51. BRCC is a ubiquitin E3 ligase complex that enhances cellular survival following DNA damage. Interacts with BRCA1. Binds polyubiquitin. Interacts with PWWP2B. Interacts with HDAC1; this interaction is enhanced in the presence of PWWP2B. It depends on Zn(2+) as a cofactor. Heart, brain, placenta, lung, liver, skeletal muscle, kidney and pancreas. Aberrantly expressed in the vast majority of breast tumors.

It localises to the nucleus. It is found in the cytoplasm. Its subcellular location is the cytoskeleton. The protein resides in the spindle pole. Metalloprotease that specifically cleaves 'Lys-63'-linked polyubiquitin chains. Does not have activity toward 'Lys-48'-linked polyubiquitin chains. Component of the BRCA1-A complex, a complex that specifically recognizes 'Lys-63'-linked ubiquitinated histones H2A and H2AX at DNA lesions sites, leading to target the BRCA1-BARD1 heterodimer to sites of DNA damage at double-strand breaks (DSBs). In the BRCA1-A complex, it specifically removes 'Lys-63'-linked ubiquitin on histones H2A and H2AX, antagonizing the RNF8-dependent ubiquitination at double-strand breaks (DSBs). Catalytic subunit of the BRISC complex, a multiprotein complex that specifically cleaves 'Lys-63'-linked ubiquitin in various substrates. Mediates the specific 'Lys-63'-specific deubiquitination associated with the COP9 signalosome complex (CSN), via the interaction of the BRISC complex with the CSN complex. The BRISC complex is required for normal mitotic spindle assembly and microtubule attachment to kinetochores via its role in deubiquitinating NUMA1. Plays a role in interferon signaling via its role in the deubiquitination of the interferon receptor IFNAR1; deubiquitination increases IFNAR1 activity by enhancing its stability and cell surface expression. Acts as a regulator of the NLRP3 inflammasome by mediating deubiquitination of NLRP3, leading to NLRP3 inflammasome assembly. Down-regulates the response to bacterial lipopolysaccharide (LPS) via its role in IFNAR1 deubiquitination. Deubiquitinates HDAC1 and PWWP2B leading to their stabilization. In Homo sapiens (Human), this protein is Lys-63-specific deubiquitinase BRCC36 (BRCC3).